Here is a 230-residue protein sequence, read N- to C-terminus: Large ribosomal subunit protein uL1 (230 aa).

This sequence belongs to the universal ribosomal protein uL1 family. In terms of assembly, part of the 50S ribosomal subunit.

In terms of biological role, binds directly to 23S rRNA. The L1 stalk is quite mobile in the ribosome, and is involved in E site tRNA release. Protein L1 is also a translational repressor protein, it controls the translation of the L11 operon by binding to its mRNA. The polypeptide is Large ribosomal subunit protein uL1 (Caldicellulosiruptor bescii (strain ATCC BAA-1888 / DSM 6725 / KCTC 15123 / Z-1320) (Anaerocellum thermophilum)).